A 317-amino-acid polypeptide reads, in one-letter code: MGTYYRRKDQFLLAKIHEAEARMTGEDSSGSSARIRRRSALDHFVRQEMDAAARAGRAPDFLHGPIRDELLGYIIAGHDSSTSALSWALKYLTTDARVQHALRQHLHAVHAASWREGRTPSVAEITSIRAPYLDAVIQEVFRCAYTTPFTLREATRDTQIMGHFVPKGTTVWFSTSGPSFTRPAIETDRKTSSHSRSPTALADKQRVPAWSPQDVALFRPERWLRPDPGPSDPPDFAYSHVDFNGNAGPMMAFGSGPRGCCGKRLVYLSMRILVTLVLWDFDLLPCPTRLSSDESNHGTASHPKQCYLRLATTTHGP.

Residues 183–205 (PAIETDRKTSSHSRSPTALADKQ) form a disordered region. Cys260 contributes to the heme binding site.

The protein belongs to the cytochrome P450 family. Heme is required as a cofactor.

Its pathway is secondary metabolite biosynthesis. Cytochrome P450 monooxygenase; part of the hps1-dma1 gene cluster that probably mediates the biosynthesis a derivative of cyclopiazonic acid (CPA). The hybrid polyketide synthase-nonribosomal peptide synthetase (PKS-NRPS) nps1 might incorporates acetyl-CoA, malonyl-CoA, and tryptophan (Trp) and utilizes a C-terminal redox-incompetent reductase domain to make and release the tryptophan tetramic acid, cyclo-acetoacetyl-L-tryptophan (c-AATrp), as the first intermediate in the pathway. In addition, the cluster also includes the tryptophan dimethylallyltransferase dma1, the FAD-dependent oxidoreductase toxD, the cytochrome P450 monooxygenase cyp3.1 and the methyltransferase DOTSEDRAFT_139328; the latter 2 being not present in all CPA-producing fungi but involved in additional modifications that occur in biosynthesis the of a range of CPA and CPA-like products. Further studies are required to clarify whether the CPA-like hps1-dma1 cluster is functional or a non-functional relic reflecting evolution of D.septosporum. In Dothistroma septosporum (strain NZE10 / CBS 128990) (Red band needle blight fungus), this protein is Hps1-dma1 cluster cytochrome P450 monooxygenase cyp3.1 (cyp3.1).